The sequence spans 539 residues: Chaperonin GroEL (539 aa).

ATP-binding positions include 29 to 32 (TLGP), 86 to 90 (DGTTT), Gly-413, 476 to 478 (NAA), and Asp-492.

Belongs to the chaperonin (HSP60) family. Forms a cylinder of 14 subunits composed of two heptameric rings stacked back-to-back. Interacts with the co-chaperonin GroES.

The protein resides in the cytoplasm. It catalyses the reaction ATP + H2O + a folded polypeptide = ADP + phosphate + an unfolded polypeptide.. Together with its co-chaperonin GroES, plays an essential role in assisting protein folding. The GroEL-GroES system forms a nano-cage that allows encapsulation of the non-native substrate proteins and provides a physical environment optimized to promote and accelerate protein folding. This is Chaperonin GroEL from Streptococcus thermophilus (strain CNRZ 1066).